The sequence spans 244 residues: Uridylate kinase (244 aa).

ATP is bound at residue 15-18 (KLSG). The interval 23 to 28 (GSEGFG) is involved in allosteric activation by GTP. Glycine 57 provides a ligand contact to UMP. 2 residues coordinate ATP: glycine 58 and arginine 62. UMP-binding positions include aspartate 77 and 138–145 (TGNPFFTT). Positions 165, 171, and 174 each coordinate ATP.

The protein belongs to the UMP kinase family. As to quaternary structure, homohexamer.

It localises to the cytoplasm. It catalyses the reaction UMP + ATP = UDP + ADP. It functions in the pathway pyrimidine metabolism; CTP biosynthesis via de novo pathway; UDP from UMP (UMPK route): step 1/1. Allosterically activated by GTP. Inhibited by UTP. Catalyzes the reversible phosphorylation of UMP to UDP. The chain is Uridylate kinase from Aeromonas salmonicida (strain A449).